Reading from the N-terminus, the 43-residue chain is Protein PsbN (43 aa).

The helical transmembrane segment at Val-7–Phe-27 threads the bilayer.

Belongs to the PsbN family.

It localises to the plastid. The protein localises to the chloroplast thylakoid membrane. In terms of biological role, may play a role in photosystem I and II biogenesis. The polypeptide is Protein PsbN (Sagittaria latifolia (Broadleaf arrowhead)).